Reading from the N-terminus, the 493-residue chain is UDP-N-acetylmuramoyl-L-alanyl-D-glutamate--2,6-diaminopimelate ligase (493 aa).

UDP-N-acetyl-alpha-D-muramoyl-L-alanyl-D-glutamate is bound by residues L30 and S32. 117-123 is an ATP binding site; it reads GTNGKTT. Residues N158, 159–160, S186, Q192, and R194 each bind UDP-N-acetyl-alpha-D-muramoyl-L-alanyl-D-glutamate; that span reads TT. K226 is modified (N6-carboxylysine). Meso-2,6-diaminopimelate-binding positions include R388, 412–415, G463, and E467; that span reads DNPR. The Meso-diaminopimelate recognition motif motif lies at 412–415; the sequence is DNPR.

This sequence belongs to the MurCDEF family. MurE subfamily. It depends on Mg(2+) as a cofactor. Carboxylation is probably crucial for Mg(2+) binding and, consequently, for the gamma-phosphate positioning of ATP.

The protein resides in the cytoplasm. It carries out the reaction UDP-N-acetyl-alpha-D-muramoyl-L-alanyl-D-glutamate + meso-2,6-diaminopimelate + ATP = UDP-N-acetyl-alpha-D-muramoyl-L-alanyl-gamma-D-glutamyl-meso-2,6-diaminopimelate + ADP + phosphate + H(+). It participates in cell wall biogenesis; peptidoglycan biosynthesis. In terms of biological role, catalyzes the addition of meso-diaminopimelic acid to the nucleotide precursor UDP-N-acetylmuramoyl-L-alanyl-D-glutamate (UMAG) in the biosynthesis of bacterial cell-wall peptidoglycan. The protein is UDP-N-acetylmuramoyl-L-alanyl-D-glutamate--2,6-diaminopimelate ligase of Vibrio vulnificus (strain YJ016).